A 399-amino-acid chain; its full sequence is Lipoyl synthase, mitochondrial (399 aa).

Residues 1–30 (MRAVLELTRRRARNARFARARAVVGARARA) constitute a mitochondrion transit peptide. The segment covering 31 to 41 (ADAQELRDDSK) has biased composition (basic and acidic residues). The tract at residues 31–58 (ADAQELRDDSKGGSSVDKATSTAAEARE) is disordered. Residues Cys-131, Cys-136, Cys-142, Cys-162, Cys-166, Cys-169, and Ser-375 each contribute to the [4Fe-4S] cluster site. In terms of domain architecture, Radical SAM core spans 145-364 (GGDGKTATAT…QEIAEEMGFL (220 aa)).

Belongs to the radical SAM superfamily. Lipoyl synthase family. [4Fe-4S] cluster serves as cofactor.

It localises to the mitochondrion. It carries out the reaction [[Fe-S] cluster scaffold protein carrying a second [4Fe-4S](2+) cluster] + N(6)-octanoyl-L-lysyl-[protein] + 2 oxidized [2Fe-2S]-[ferredoxin] + 2 S-adenosyl-L-methionine + 4 H(+) = [[Fe-S] cluster scaffold protein] + N(6)-[(R)-dihydrolipoyl]-L-lysyl-[protein] + 4 Fe(3+) + 2 hydrogen sulfide + 2 5'-deoxyadenosine + 2 L-methionine + 2 reduced [2Fe-2S]-[ferredoxin]. The protein operates within protein modification; protein lipoylation via endogenous pathway; protein N(6)-(lipoyl)lysine from octanoyl-[acyl-carrier-protein]: step 2/2. Catalyzes the radical-mediated insertion of two sulfur atoms into the C-6 and C-8 positions of the octanoyl moiety bound to the lipoyl domains of lipoate-dependent enzymes, thereby converting the octanoylated domains into lipoylated derivatives. In Ostreococcus lucimarinus (strain CCE9901), this protein is Lipoyl synthase, mitochondrial.